A 236-amino-acid polypeptide reads, in one-letter code: MLNPNIFHMPKIIIALDFCNKKSAMKLVNLLNPSIFYLKIGKEMFTILGCKFVKELHQLGFNIFLDLKFHDIPNTVFNATKAAADLGIWMLSVHASGGKEMLISAKKALKSFKKAPLLIAVTALTSFKEEALKEIGINISLTEYILKLSKLSNDCGLDGIVCPGKEAKKIKFLFGNKYKIITPGIRIAKDLLYDQNNIITPKKAKEYKIDYIVIGRSITMSKNPIKKLDLIIKSMQ.

Residues Asp17, Lys39, 66-75 (DLKFHDIPNT), Thr125, Arg186, Gln195, Gly215, and Arg216 each bind substrate. Lys68 serves as the catalytic Proton donor.

It belongs to the OMP decarboxylase family. Type 1 subfamily. Homodimer.

The catalysed reaction is orotidine 5'-phosphate + H(+) = UMP + CO2. Its pathway is pyrimidine metabolism; UMP biosynthesis via de novo pathway; UMP from orotate: step 2/2. In terms of biological role, catalyzes the decarboxylation of orotidine 5'-monophosphate (OMP) to uridine 5'-monophosphate (UMP). The sequence is that of Orotidine 5'-phosphate decarboxylase from Buchnera aphidicola subsp. Acyrthosiphon pisum (strain 5A).